Here is a 570-residue protein sequence, read N- to C-terminus: Zinc finger protein 76 (570 aa).

Lys24 is covalently cross-linked (Glycyl lysine isopeptide (Lys-Gly) (interchain with G-Cter in SUMO2)). 3 repeat units span residues 34–45 (IQLEDGTTAYIH), 62–73 (VQLEDGSMAYIH), and 88–99 (VQLEDGSTAYIH). The segment at 34–99 (IQLEDGTTAY…LEDGSTAYIH (66 aa)) is 3 X 12 AA approximate repeats. C2H2-type zinc fingers lie at residues 165 to 189 (FRCGYKGCGRLYTTAHHLKVHERAH), 195 to 219 (YRCDFPSCGKAFATGYGLKSHVRTH), 225 to 249 (YKCPEELCSKAFKTSGDLQKHVRTH), 255 to 279 (FQCPFEGCGRSFTTSNIRKVHVRTH), 285 to 309 (YTCPEPHCGRGFTSATNYKNHVRIH), 315 to 339 (YVCTVPGCGKRFTEYSSLYKHHVVH), and 345 to 368 (YTCSTCGKTYRQTSTLAMHKRSAH). The segment at 365 to 401 (RSAHGELEATEESEQALYEQQQLEAASAAEESPPPKR) is disordered. Over residues 379-395 (QALYEQQQLEAASAAEE) the composition is skewed to low complexity.

It belongs to the krueppel C2H2-type zinc-finger protein family. In terms of tissue distribution, testis.

The protein localises to the nucleus. Its function is as follows. May be involved in transcriptional regulation. The sequence is that of Zinc finger protein 76 (ZNF76) from Homo sapiens (Human).